Reading from the N-terminus, the 306-residue chain is Glutaminase (306 aa).

Residues Ser-61, Asn-111, Glu-157, Asn-164, Tyr-188, Tyr-240, and Val-258 each coordinate substrate.

This sequence belongs to the glutaminase family. As to quaternary structure, homotetramer.

The catalysed reaction is L-glutamine + H2O = L-glutamate + NH4(+). In Psychrobacter cryohalolentis (strain ATCC BAA-1226 / DSM 17306 / VKM B-2378 / K5), this protein is Glutaminase.